A 171-amino-acid polypeptide reads, in one-letter code: 3-hydroxydecanoyl-[acyl-carrier-protein] dehydratase (171 aa).

Histidine 70 is a catalytic residue.

It belongs to the thioester dehydratase family. FabA subfamily. Homodimer.

Its subcellular location is the cytoplasm. The enzyme catalyses a (3R)-hydroxyacyl-[ACP] = a (2E)-enoyl-[ACP] + H2O. It carries out the reaction (3R)-hydroxydecanoyl-[ACP] = (2E)-decenoyl-[ACP] + H2O. The catalysed reaction is (2E)-decenoyl-[ACP] = (3Z)-decenoyl-[ACP]. Its pathway is lipid metabolism; fatty acid biosynthesis. In terms of biological role, necessary for the introduction of cis unsaturation into fatty acids. Catalyzes the dehydration of (3R)-3-hydroxydecanoyl-ACP to E-(2)-decenoyl-ACP and then its isomerization to Z-(3)-decenoyl-ACP. Can catalyze the dehydratase reaction for beta-hydroxyacyl-ACPs with saturated chain lengths up to 16:0, being most active on intermediate chain length. The chain is 3-hydroxydecanoyl-[acyl-carrier-protein] dehydratase from Shewanella sp. (strain ANA-3).